The following is a 194-amino-acid chain: Probable GTP-binding protein EngB (194 aa).

An EngB-type G domain is found at 22 to 194 (GKPEIALVGR…EVWHWIEQHI (173 aa)). GTP is bound by residues 30-37 (GRSNVGKS), 57-61 (GKTQT), 75-78 (DVPG), 142-145 (TKSD), and 175-177 (FSS). The Mg(2+) site is built by Ser37 and Thr59.

It belongs to the TRAFAC class TrmE-Era-EngA-EngB-Septin-like GTPase superfamily. EngB GTPase family. The cofactor is Mg(2+).

Its function is as follows. Necessary for normal cell division and for the maintenance of normal septation. This chain is Probable GTP-binding protein EngB, found in Leuconostoc mesenteroides subsp. mesenteroides (strain ATCC 8293 / DSM 20343 / BCRC 11652 / CCM 1803 / JCM 6124 / NCDO 523 / NBRC 100496 / NCIMB 8023 / NCTC 12954 / NRRL B-1118 / 37Y).